We begin with the raw amino-acid sequence, 83 residues long: Cytochrome b559 subunit alpha (83 aa).

The chain crosses the membrane as a helical span at residues 21 to 35 (VIHSITIPSLFIAGW). Residue H23 coordinates heme.

This sequence belongs to the PsbE/PsbF family. Heterodimer of an alpha subunit and a beta subunit. PSII is composed of 1 copy each of membrane proteins PsbA, PsbB, PsbC, PsbD, PsbE, PsbF, PsbH, PsbI, PsbJ, PsbK, PsbL, PsbM, PsbT, PsbX, PsbY, PsbZ, Psb30/Ycf12, at least 3 peripheral proteins of the oxygen-evolving complex and a large number of cofactors. It forms dimeric complexes. Requires heme b as cofactor.

The protein localises to the plastid. The protein resides in the chloroplast thylakoid membrane. This b-type cytochrome is tightly associated with the reaction center of photosystem II (PSII). PSII is a light-driven water:plastoquinone oxidoreductase that uses light energy to abstract electrons from H(2)O, generating O(2) and a proton gradient subsequently used for ATP formation. It consists of a core antenna complex that captures photons, and an electron transfer chain that converts photonic excitation into a charge separation. This is Cytochrome b559 subunit alpha from Citrus sinensis (Sweet orange).